An 875-amino-acid polypeptide reads, in one-letter code: Neurotrypsin (875 aa).

The N-terminal stretch at 1 to 20 is a signal peptide; sequence MTLARFVLALMLGALPEVVG. A glycan (N-linked (GlcNAc...) asparagine) is linked at asparagine 26. The tract at residues 29-88 is disordered; sequence LHHSHRHSPPAGPHYPYYLPTQQRPPRTRPPPPLPRFPRPPRALPAQRPHALQAGHTPRP. The segment covering 56-71 has biased composition (pro residues); it reads TRPPPPLPRFPRPPRA. One can recognise a Kringle domain in the interval 93-165; that stretch reads CPAGEPWVSV…GKVDWGYCDC (73 aa). 20 cysteine pairs are disulfide-bonded: cysteine 93-cysteine 165, cysteine 109-cysteine 149, cysteine 138-cysteine 163, cysteine 195-cysteine 259, cysteine 208-cysteine 269, cysteine 239-cysteine 249, cysteine 305-cysteine 369, cysteine 318-cysteine 379, cysteine 349-cysteine 359, cysteine 412-cysteine 475, cysteine 425-cysteine 485, cysteine 455-cysteine 465, cysteine 525-cysteine 589, cysteine 538-cysteine 599, cysteine 569-cysteine 579, cysteine 619-cysteine 750, cysteine 661-cysteine 677, cysteine 765-cysteine 831, cysteine 794-cysteine 808, and cysteine 821-cysteine 850. 4 SRCR domains span residues 170–271, 280–381, 387–487, and 500–601; these read VRLR…TCSF, IRLA…SCTP, IRLA…ACYP, and VRLM…ICDY. The interval 619–630 is zymogen activation region; the sequence is CGLRLLHRRQKR. Residues 631–874 form the Peptidase S1 domain; that stretch reads IIGGKNSLRG…FVPWIKSVTK (244 aa). Histidine 676 acts as the Charge relay system in catalysis. A glycan (N-linked (GlcNAc...) asparagine) is linked at asparagine 683. The active-site Charge relay system is aspartate 726. The active-site Charge relay system is serine 825.

Belongs to the peptidase S1 family. In terms of tissue distribution, brain and Leydig cells of the testis.

The protein resides in the secreted. Plays a role in neuronal plasticity and the proteolytic action may subserve structural reorganizations associated with learning and memory operations. The sequence is that of Neurotrypsin (PRSS12) from Homo sapiens (Human).